We begin with the raw amino-acid sequence, 593 residues long: Arginine--tRNA ligase (593 aa).

A 'HIGH' region motif is present at residues 138–148 (ANPTGPLHVGH).

The protein belongs to the class-I aminoacyl-tRNA synthetase family. Monomer.

It is found in the cytoplasm. It catalyses the reaction tRNA(Arg) + L-arginine + ATP = L-arginyl-tRNA(Arg) + AMP + diphosphate. This is Arginine--tRNA ligase from Burkholderia vietnamiensis (strain G4 / LMG 22486) (Burkholderia cepacia (strain R1808)).